Reading from the N-terminus, the 380-residue chain is Chaperone protein DnaJ (380 aa).

A J domain is found at 4–69 (DYYEILGVTR…QKRAAYDRFG (66 aa)). Residues 135 to 213 (GKTAQINIPS…CQGTRRVEKN (79 aa)) form a CR-type zinc finger. 8 residues coordinate Zn(2+): cysteine 148, cysteine 151, cysteine 165, cysteine 168, cysteine 187, cysteine 190, cysteine 201, and cysteine 204. CXXCXGXG motif repeat units follow at residues 148–155 (CDSCEGSG), 165–172 (CGTCHGAG), 187–194 (CHACNGRG), and 201–208 (CPKCQGTR).

This sequence belongs to the DnaJ family. As to quaternary structure, homodimer. Zn(2+) serves as cofactor.

Its subcellular location is the cytoplasm. Its function is as follows. Participates actively in the response to hyperosmotic and heat shock by preventing the aggregation of stress-denatured proteins and by disaggregating proteins, also in an autonomous, DnaK-independent fashion. Unfolded proteins bind initially to DnaJ; upon interaction with the DnaJ-bound protein, DnaK hydrolyzes its bound ATP, resulting in the formation of a stable complex. GrpE releases ADP from DnaK; ATP binding to DnaK triggers the release of the substrate protein, thus completing the reaction cycle. Several rounds of ATP-dependent interactions between DnaJ, DnaK and GrpE are required for fully efficient folding. Also involved, together with DnaK and GrpE, in the DNA replication of plasmids through activation of initiation proteins. This Bartonella quintana (strain Toulouse) (Rochalimaea quintana) protein is Chaperone protein DnaJ.